The chain runs to 493 residues: Aspartate-semialdehyde dehydrogenase (Non-phosphorylating) (493 aa).

NADP(+) is bound by residues 160 to 161 (WN), 184 to 187 (KPAH), and 237 to 238 (GS). Residue Glu259 is the Proton acceptor of the active site. Leu260 lines the NADP(+) pocket. Residue Cys293 is the Nucleophile of the active site. Glu390 provides a ligand contact to NADP(+).

It belongs to the aldehyde dehydrogenase family.

It is found in the cytoplasm. It catalyses the reaction L-aspartate 4-semialdehyde + NAD(+) + H2O = L-aspartate + NADH + 2 H(+). Its function is as follows. Involved in the degradation of ectoine, which allows H.elongata to utilize ectoine as both a carbon and a nitrogen source for growth. Probably catalyzes the NAD(+)-dependent oxidation of L-aspartate-semialdehyde to L-aspartate. This is Aspartate-semialdehyde dehydrogenase (Non-phosphorylating) from Halomonas elongata (strain ATCC 33173 / DSM 2581 / NBRC 15536 / NCIMB 2198 / 1H9).